A 66-amino-acid chain; its full sequence is Large ribosomal subunit protein bL33c (66 aa).

Belongs to the bacterial ribosomal protein bL33 family.

Its subcellular location is the plastid. The protein resides in the chloroplast. This is Large ribosomal subunit protein bL33c from Brachypodium distachyon (Purple false brome).